Consider the following 229-residue polypeptide: MNSIKFPVLDRTTKNSVISTTLNDLSNWSRLSSLWPLLYGTSCCFIEFASLIGSRFDFDRYGLVPRSSPRQADLILTAGTVTMKMAPSLVRLYEQMPEPKYVIAMGACTITGGMFSTDSYSTVRGVDKLIPVDVYLPGCPPKPEAVIDAITKLRTKIAREIYKDQIRPQQGNRCFTTNHKFLIVRSTDTGNSDQELLYPPSSTSEISTETFFKYKSPVSSHELVNSGGV.

Residues C43, C44, C108, and C139 each contribute to the [4Fe-4S] cluster site.

The protein belongs to the complex I 20 kDa subunit family. NDH is composed of at least 16 different subunits, 5 of which are encoded in the nucleus. The cofactor is [4Fe-4S] cluster.

Its subcellular location is the plastid. The protein resides in the chloroplast thylakoid membrane. It catalyses the reaction a plastoquinone + NADH + (n+1) H(+)(in) = a plastoquinol + NAD(+) + n H(+)(out). The enzyme catalyses a plastoquinone + NADPH + (n+1) H(+)(in) = a plastoquinol + NADP(+) + n H(+)(out). Functionally, NDH shuttles electrons from NAD(P)H:plastoquinone, via FMN and iron-sulfur (Fe-S) centers, to quinones in the photosynthetic chain and possibly in a chloroplast respiratory chain. The immediate electron acceptor for the enzyme in this species is believed to be plastoquinone. Couples the redox reaction to proton translocation, and thus conserves the redox energy in a proton gradient. The sequence is that of NAD(P)H-quinone oxidoreductase subunit K, chloroplastic from Aethionema grandiflorum (Persian stone-cress).